Consider the following 277-residue polypeptide: Uridine-cytidine kinase 1 (277 aa).

Over residues 1 to 10 (MASAGGGDCE) the composition is skewed to gly residues. Positions 1 to 29 (MASAGGGDCEGAGPEADRPHQRPFLIGVS) are disordered. 30-38 (GGTASGKST) contacts ATP. The substrate site is built by aspartate 87, tyrosine 115, histidine 120, arginine 169, arginine 178, and glutamine 186. Residue aspartate 215 participates in ATP binding. The disordered stretch occupies residues 246-277 (RSHKRTFPEPGEHPAVLASGKRSHLESSSRPH). Threonine 251 carries the post-translational modification Phosphothreonine. A compositionally biased stretch (basic and acidic residues) spans 268–277 (SHLESSSRPH).

It belongs to the uridine kinase family.

It carries out the reaction uridine + ATP = UMP + ADP + H(+). It catalyses the reaction cytidine + ATP = CMP + ADP + H(+). It participates in pyrimidine metabolism; CTP biosynthesis via salvage pathway; CTP from cytidine: step 1/3. It functions in the pathway pyrimidine metabolism; UMP biosynthesis via salvage pathway; UMP from uridine: step 1/1. Phosphorylates uridine and cytidine to uridine monophosphate and cytidine monophosphate. Does not phosphorylate deoxyribonucleosides or purine ribonucleosides. Can use ATP or GTP as a phosphate donor. This chain is Uridine-cytidine kinase 1 (UCK1), found in Bos taurus (Bovine).